The primary structure comprises 434 residues: Adenylosuccinate synthetase (434 aa).

Residues 22-28 (GDEGKGK) and 50-52 (GHT) contribute to the GTP site. Residue Asp-23 is the Proton acceptor of the active site. Residues Asp-23 and Gly-50 each contribute to the Mg(2+) site. Residues 23–26 (DEGK), 48–51 (NAGH), Thr-139, Arg-153, Gln-234, Thr-249, and Arg-313 each bind IMP. His-51 (proton donor) is an active-site residue. 309 to 315 (ATTGRKR) is a binding site for substrate. Residues Arg-315, 341-343 (KLD), and 423-425 (SVG) each bind GTP.

This sequence belongs to the adenylosuccinate synthetase family. Homodimer. The cofactor is Mg(2+).

The protein resides in the cytoplasm. It carries out the reaction IMP + L-aspartate + GTP = N(6)-(1,2-dicarboxyethyl)-AMP + GDP + phosphate + 2 H(+). Its pathway is purine metabolism; AMP biosynthesis via de novo pathway; AMP from IMP: step 1/2. Plays an important role in the de novo pathway of purine nucleotide biosynthesis. Catalyzes the first committed step in the biosynthesis of AMP from IMP. This chain is Adenylosuccinate synthetase, found in Chlorobium phaeovibrioides (strain DSM 265 / 1930) (Prosthecochloris vibrioformis (strain DSM 265)).